The sequence spans 203 residues: NADH dehydrogenase [ubiquinone] 1 alpha subcomplex assembly factor 4 (203 aa).

The protein belongs to the NDUFAF4 family. As to quaternary structure, together with NdufAF3 associates with mitochondrial complex I assembly intermediates during its biogenesis.

Involved in the assembly of mitochondrial NADH:ubiquinone oxidoreductase complex (complex I). Together with NdufAF3, involved in biogenesis of complex 1 modules N, Q and P-peripheral, but not the P-distal module. Required for recruitment of the complex I assembly factor Timmdc1 to complex 1 assembly intermediates. The sequence is that of NADH dehydrogenase [ubiquinone] 1 alpha subcomplex assembly factor 4 from Drosophila melanogaster (Fruit fly).